Here is a 328-residue protein sequence, read N- to C-terminus: Hairy/enhancer-of-split related with YRPW motif-like protein (328 aa).

A disordered region spans residues 1–54 (MKRPREPSGSDSESDGPIDVGREGELSQMARPLSTPSPSQMQARKKRRGIIEKR). The interval 42–111 (QARKKRRGII…GGTGFFDARA (70 aa)) is transcriptional repression and interaction with NCOR1 and SIN3A. A bHLH domain is found at 43 to 98 (ARKKRRGIIEKRRRDRINSSLSELRRLVPTAFEKQGSSKLEKAEVLQMTVDHLKML). The Orange domain occupies 116–153 (FRSIGFRECLTEVIRYLGVLEGPSSRADPVRIRLLSHL). Positions 236 to 272 (LLPSRGASSTRRARPLERPAAPLPAAPSGRATRGSHM) are disordered.

It belongs to the HEY family. As to quaternary structure, self-associates. Interacts with GATA4, GATA6, HES1, HEY1 and HEY2. Interacts with HDAC1, NCOR1 and SIN3A.

It localises to the nucleus. Downstream effector of Notch signaling which may be required for cardiovascular development. Transcriptional repressor which binds preferentially to the canonical E box sequence 5'-CACGTG-3'. Represses transcription by the cardiac transcriptional activators GATA4 and GATA6. The polypeptide is Hairy/enhancer-of-split related with YRPW motif-like protein (HEYL) (Bos taurus (Bovine)).